The primary structure comprises 347 residues: G-protein coupled receptor homolog U12 (347 aa).

6 helical membrane-spanning segments follow: residues 36 to 56 (GITL…MILY), 67 to 87 (FYVI…FFMT), 103 to 124 (LVYF…IIAT), 147 to 167 (IGIL…FVKT), 194 to 214 (IVFS…FYVI), and 236 to 256 (ILLL…ICEI). Residues Cys101 and Cys176 are joined by a disulfide bond. Positions 321–347 (QKRKDSDASEHDQNSKSKASVEKNQPL) are disordered. Basic and acidic residues predominate over residues 322–341 (KRKDSDASEHDQNSKSKASV).

This sequence belongs to the G-protein coupled receptor 1 family.

It localises to the membrane. Its function is as follows. Probable G-protein coupled receptor. The sequence is that of G-protein coupled receptor homolog U12 (U12) from Homo sapiens (Human).